We begin with the raw amino-acid sequence, 387 residues long: Cytochrome b (387 aa).

4 consecutive transmembrane segments (helical) span residues 32–52 (FGSLLALCLGIQIVTGVTLAM), 76–98 (WLVRYLHSNTASAFFFLVYLHIG), 113–133 (TWAIGTVILIVMMATAFLGYV), and 179–199 (FFALHFLLPFVLAALALMHLI). Heme b contacts are provided by His-82 and His-96. Residues His-183 and His-197 each coordinate heme b. His-202 is a binding site for a ubiquinone. A run of 4 helical transmembrane segments spans residues 226–246 (FIFKDLITIFIFFIVLSIFVF), 290–310 (LLGVIAMFAAILALMVMPITD), 322–342 (LSKVVFYIFVANFLILMQIGA), and 349–369 (FIEFGQISTIIYFAYFFVIVP).

This sequence belongs to the cytochrome b family. Fungal cytochrome b-c1 complex contains 10 subunits; 3 respiratory subunits, 2 core proteins and 5 low-molecular weight proteins. Cytochrome b-c1 complex is a homodimer. It depends on heme b as a cofactor.

It localises to the mitochondrion inner membrane. Component of the ubiquinol-cytochrome c reductase complex (complex III or cytochrome b-c1 complex) that is part of the mitochondrial respiratory chain. The b-c1 complex mediates electron transfer from ubiquinol to cytochrome c. Contributes to the generation of a proton gradient across the mitochondrial membrane that is then used for ATP synthesis. The sequence is that of Cytochrome b (cob) from Emericella nidulans (Aspergillus nidulans).